We begin with the raw amino-acid sequence, 828 residues long: Periplasmic nitrate reductase (828 aa).

Residues 1–31 (MKLSRRSFMKANAVAAAAAAAGLSVPGVARA) constitute a signal peptide (tat-type signal). The 4Fe-4S Mo/W bis-MGD-type domain occupies 39-95 (IKWDKAPCRFCGTGCGVLVGTQQGRVVACQGDPDAPVNRGLNCIKGYFLPKIMYGKD). 4 residues coordinate [4Fe-4S] cluster: Cys46, Cys49, Cys53, and Cys81. Mo-bis(molybdopterin guanine dinucleotide)-binding positions include Lys83, Gln150, Asn175, Cys179, 212-219 (WGSNMAEM), 243-247 (STFQH), 262-264 (QSD), Met372, Gln376, Asn482, 508-509 (SD), Lys531, Asp558, and 718-727 (TGRVLEHWHT). Phe794 lines the substrate pocket. Mo-bis(molybdopterin guanine dinucleotide) is bound by residues Asn802 and Lys819.

It belongs to the prokaryotic molybdopterin-containing oxidoreductase family. NasA/NapA/NarB subfamily. In terms of assembly, component of the periplasmic nitrate reductase NapAB complex composed of NapA and NapB. [4Fe-4S] cluster is required as a cofactor. Mo-bis(molybdopterin guanine dinucleotide) serves as cofactor. Predicted to be exported by the Tat system. The position of the signal peptide cleavage has not been experimentally proven.

It is found in the periplasm. It catalyses the reaction 2 Fe(II)-[cytochrome] + nitrate + 2 H(+) = 2 Fe(III)-[cytochrome] + nitrite + H2O. Functionally, catalytic subunit of the periplasmic nitrate reductase complex NapAB. Receives electrons from NapB and catalyzes the reduction of nitrate to nitrite. This Salmonella schwarzengrund (strain CVM19633) protein is Periplasmic nitrate reductase.